A 122-amino-acid polypeptide reads, in one-letter code: Basic phospholipase A2 (122 aa).

Disulfide bonds link cysteine 26/cysteine 115, cysteine 28/cysteine 44, cysteine 43/cysteine 95, cysteine 49/cysteine 122, cysteine 50/cysteine 88, cysteine 57/cysteine 81, and cysteine 75/cysteine 86. Ca(2+) is bound by residues tyrosine 27, glycine 29, and glycine 31. Residue histidine 47 is part of the active site. Aspartate 48 lines the Ca(2+) pocket. Aspartate 89 is a catalytic residue.

It belongs to the phospholipase A2 family. Group II subfamily. D49 sub-subfamily. Requires Ca(2+) as cofactor. As to expression, expressed by the venom gland.

The protein localises to the secreted. The enzyme catalyses a 1,2-diacyl-sn-glycero-3-phosphocholine + H2O = a 1-acyl-sn-glycero-3-phosphocholine + a fatty acid + H(+). Its function is as follows. Snake venom phospholipase A2 (PLA2) that does not inhibit platelet aggregation. Exhibits cytotoxic and anticoagulant activity. Induces Ehrlich tumor growth but not angiogenesis. PLA2 catalyzes the calcium-dependent hydrolysis of the 2-acyl groups in 3-sn-phosphoglycerides. This Bothrops leucurus (Whitetail lancehead) protein is Basic phospholipase A2.